A 306-amino-acid chain; its full sequence is Transcription initiation factor IIB 2 (306 aa).

The TFIIB-type zinc-finger motif lies at 6 to 37; it reads PKRVCPICGSTEFIYDPRRGEIVCAKCGYVIE. The Zn(2+) site is built by C10, C13, C29, and C32. Tandem repeats lie at residues 123–206 and 217–298.

Belongs to the TFIIB family.

In terms of biological role, stabilizes TBP binding to an archaeal box-A promoter. Also responsible for recruiting RNA polymerase II to the pre-initiation complex (DNA-TBP-TFIIB). In Thermococcus kodakarensis (strain ATCC BAA-918 / JCM 12380 / KOD1) (Pyrococcus kodakaraensis (strain KOD1)), this protein is Transcription initiation factor IIB 2.